Consider the following 163-residue polypeptide: Large ribosomal subunit protein uL10 (163 aa).

It belongs to the universal ribosomal protein uL10 family. In terms of assembly, part of the ribosomal stalk of the 50S ribosomal subunit. The N-terminus interacts with L11 and the large rRNA to form the base of the stalk. The C-terminus forms an elongated spine to which L12 dimers bind in a sequential fashion forming a multimeric L10(L12)X complex.

Its function is as follows. Forms part of the ribosomal stalk, playing a central role in the interaction of the ribosome with GTP-bound translation factors. The polypeptide is Large ribosomal subunit protein uL10 (Actinobacillus succinogenes (strain ATCC 55618 / DSM 22257 / CCUG 43843 / 130Z)).